Here is a 258-residue protein sequence, read N- to C-terminus: Tetratricopeptide repeat protein 33 (258 aa).

TPR repeat units lie at residues 59-92 (SKRLKEEGGLLAEDGRQKEALTKWDEAIQLTPGD), 93-126 (AALYEMKAQVLMGVHEIFPAVQAAETAVQRNPHF), and 127-160 (VEAWQTLGRAQLSLGEITMAIRSFQIGLHICPAN). The disordered stretch occupies residues 231-258 (SASGSENLSDRKEDKVETNDSKEFIKAR). Over residues 238–258 (LSDRKEDKVETNDSKEFIKAR) the composition is skewed to basic and acidic residues.

This Xenopus laevis (African clawed frog) protein is Tetratricopeptide repeat protein 33 (ttc33).